The sequence spans 438 residues: MSKNVVIIGTQWGDEGKGKVVDLITDKVASVVRFQGGHNAGHTLVINGKTTILHLIPSGILRNHVECLIGHGVVLSMSALLKEIAELEVADIDTTKRLKISPGCPLILPYHIELDNAREIKRGKAAIGTTGNGIGPAYEDKVARRGLRVSDLLDPNLFASKLKEVMEYHNFFLTHYYNANPVDYQTTLDEVLSQVEQTKHMIVDVTEQIHQHIANDENILFEGAQGALLDIDQGTYPFVTSSNTTSGAAVTGSGIGVTDIDYVLGIVKAYTTRVGGGPFPTELIYDVALDKGDEIGKVLGTVGHEFGATTGRQRRCGWLDMVTLKRSFNLNAVTGICLTKLDVMDTLETIKICTSYEIDGVETTIPPFSAEDYAKAKPIYIKIPGWKTSTIGTDSFDSLPVEAQSYIRKIEQLANLPVDILSTGPDRLQTLILKHPFE.

Residues 13–19 (GDEGKGK) and 41–43 (GHT) each bind GTP. D14 acts as the Proton acceptor in catalysis. D14 and G41 together coordinate Mg(2+). IMP-binding positions include 14–17 (DEGK), 39–42 (NAGH), T130, R144, Q225, T240, and R312. The active-site Proton donor is the H42. 308–314 (ATTGRQR) provides a ligand contact to substrate. GTP is bound by residues R314, 340–342 (KLD), and 422–424 (STG).

Belongs to the adenylosuccinate synthetase family. As to quaternary structure, homodimer. Requires Mg(2+) as cofactor.

The protein localises to the cytoplasm. The enzyme catalyses IMP + L-aspartate + GTP = N(6)-(1,2-dicarboxyethyl)-AMP + GDP + phosphate + 2 H(+). It participates in purine metabolism; AMP biosynthesis via de novo pathway; AMP from IMP: step 1/2. In terms of biological role, plays an important role in the de novo pathway of purine nucleotide biosynthesis. Catalyzes the first committed step in the biosynthesis of AMP from IMP. The polypeptide is Adenylosuccinate synthetase (Ruthia magnifica subsp. Calyptogena magnifica).